The chain runs to 127 residues: Large ribosomal subunit protein bL17 (127 aa).

The protein belongs to the bacterial ribosomal protein bL17 family. In terms of assembly, part of the 50S ribosomal subunit. Contacts protein L32.

The protein is Large ribosomal subunit protein bL17 of Alcanivorax borkumensis (strain ATCC 700651 / DSM 11573 / NCIMB 13689 / SK2).